Reading from the N-terminus, the 393-residue chain is Succinate--CoA ligase [ADP-forming] subunit beta (393 aa).

One can recognise an ATP-grasp domain in the interval 9 to 242 (KELFAKHGVP…RAATDPLEWK (234 aa)). ATP is bound by residues lysine 45, 52 to 54 (GRG), serine 94, and glutamate 99. Residues asparagine 191 and aspartate 211 each contribute to the Mg(2+) site. Residues asparagine 262 and 324–326 (GIT) contribute to the substrate site.

Belongs to the succinate/malate CoA ligase beta subunit family. As to quaternary structure, heterotetramer of two alpha and two beta subunits. Mg(2+) is required as a cofactor.

It carries out the reaction succinate + ATP + CoA = succinyl-CoA + ADP + phosphate. It catalyses the reaction GTP + succinate + CoA = succinyl-CoA + GDP + phosphate. It functions in the pathway carbohydrate metabolism; tricarboxylic acid cycle; succinate from succinyl-CoA (ligase route): step 1/1. Its function is as follows. Succinyl-CoA synthetase functions in the citric acid cycle (TCA), coupling the hydrolysis of succinyl-CoA to the synthesis of either ATP or GTP and thus represents the only step of substrate-level phosphorylation in the TCA. The beta subunit provides nucleotide specificity of the enzyme and binds the substrate succinate, while the binding sites for coenzyme A and phosphate are found in the alpha subunit. The polypeptide is Succinate--CoA ligase [ADP-forming] subunit beta (Mycobacterium leprae (strain Br4923)).